The sequence spans 381 residues: F-box/LRR-repeat protein At4g14103 (381 aa).

The F-box domain occupies 7–60 (RDVISSLPDDISSHILSFLPTKEAASTSVLSKKWRYLFAFVPNLDLDDSVYLNP). 6 LRR repeats span residues 118-146 (DLHLNLESEFLLPSQVYLCKTLVWLKLRF), 171-196 (HFEEHGVGLTKLLSGCPMLEDLVLDD), 218-243 (SWQERDEFPKSVLLDTPNLVYLKFTD), 249-274 (YPKVNLDSLVEAHIDLRLLKPLLINY), 299-330 (TLYLSANTLQVLTYSCDAIPIFNNLTHLTIES), and 331-356 (NPRVGWQSVPGLLKNSPNLETLIFQG).

The protein is F-box/LRR-repeat protein At4g14103 of Arabidopsis thaliana (Mouse-ear cress).